Reading from the N-terminus, the 838-residue chain is MTDTTLPPDDSLDRIEPVDIEQEMQRSYIDYAMSVIVGRALPEVRDGLKPVHRRVLYAMFDSGFRPDRSHAKSARSVAETMGNYHPHGDASIYDSLVRMAQPWSLRYPLVDGQGNFGSPGNDPPAAMRYTEARLTPLAMEMLREIDEETVDFIPNYDGRVQEPTVLPSRFPNLLANGSGGIAVGMATNIPPHNLRELADAVFWALENHDADEEETLAAVMGRVKGPDFPTAGLIVGSQGTADAYKTGRGSIRMRGVVEVEEDSRGRTSLVITELPYQVNHDNFITSIAEQVRDGKLAGISNIEDQSSDRVGLRIVIEIKRDAVAKVVINNLYKHTQLQTSFGANMLAIVDGVPRTLRLDQLIRYYVDHQLDVIVRRTTYRLRKANERAHILRGLVKALDALDEVIALIRASETVDIARAGLIELLDIDEIQAQAILDMQLRRLAALERQRIIDDLAKIEAEIADLEDILAKPERQRGIVRDELAEIVDRHGDDRRTRIIAADGDVSDEDLIAREDVVVTITETGYAKRTKTDLYRSQKRGGKGVQGAGLKQDDIVAHFFVCSTHDLILFFTTQGRVYRAKAYDLPEASRTARGQHVANLLAFQPEERIAQVIQIRGYTDAPYLVLATRNGLVKKSKLTDFDSNRSGGIVAVNLRDNDELVGAVLCSAGDDLLLVSANGQSIRFSATDEALRPMGRATSGVQGMRFNIDDRLLSLNVVREGTYLLVATSGGYAKRTAIEEYPVQGRGGKGVLTVMYDRRRGRLVGALIVDDDSELYAVTSGGGVIRTAARQVRKAGRQTKGVRLMNLGEGDTLLAIARNAEESGDDNAVDANGADQTGN.

Thr2 carries the post-translational modification N-acetylthreonine. One can recognise a Topo IIA-type catalytic domain in the interval 41–510 (LPEVRDGLKP…ADGDVSDEDL (470 aa)). The O-(5'-phospho-DNA)-tyrosine intermediate role is filled by Tyr129. Positions 504, 506, 508, and 515 each coordinate Ca(2+). Positions 504–516 (DVSDEDLIAREDV) constitute an EF-hand domain. A C-terminal domain CTD region spans residues 514 to 838 (EDVVVTITET…DANGADQTGN (325 aa)). A GyrA-box motif is present at residues 537 to 543 (QKRGGKG). The short motif at 743 to 749 (QGRGGKG) is the GyrA-box-1 element.

This sequence belongs to the type II topoisomerase GyrA/ParC subunit family. In terms of assembly, heterotetramer, composed of two GyrA and two GyrB chains. In the heterotetramer, GyrA contains the active site tyrosine that forms a transient covalent intermediate with DNA, while GyrB binds cofactors and catalyzes ATP hydrolysis. Requires Ca(2+) as cofactor.

It localises to the cytoplasm. It catalyses the reaction ATP-dependent breakage, passage and rejoining of double-stranded DNA.. Its activity is regulated as follows. DNA supercoiling inhibited by (fluoro)quinoline antibiotics such as sparfloxacin and levofloxacin, which usually act on GyrA. DNA supercoiling inhibited by the coumarin antibiotic novobiocin which acts on GyrB. Quinolones lead to gyrase-mediated dsDNA cleavage while preventing reclosure. DNA supercoiling activity inhibited by aminopyrazinamide and pyrrolamide derivatives, probably via effects on the GyrB subunit. DNA relaxation inhibited by ATP and its analogs. DNA supercoiling, relaxation, decatenation and quinolone-promoted DNA cleavage are inhibited by MfpA (50% inhibition occurs at 2 uM), inhibition of gyrase activities is enhanced in a concentration-dependent manner by MfpA. Its function is as follows. A type II topoisomerase that negatively supercoils closed circular double-stranded (ds) DNA in an ATP-dependent manner to maintain chromosomes in an underwound state, while in the absence of ATP it relaxes supercoiled dsDNA. Also catalyzes the interconversion of other topological isomers of dsDNA rings, including catenanes. Gyrase from M.tuberculosis has higher decatenation than supercoiling activity compared to E.coli; as M.tuberculosis only has 1 type II topoisomerase, gyrase has to fulfill the decatenation function of topoisomerase IV as well. At comparable concentrations M.tuberculosis gyrase cannot introduce as many negative supercoils into DNA as the E.coli enzyme, and its ATPase activity is lower, perhaps because it does not couple DNA wrapping and ATP binding as well as E.coli. In terms of biological role, negative supercoiling favors strand separation, and DNA replication, transcription, recombination and repair, all of which involve strand separation. Type II topoisomerases break and join 2 DNA strands simultaneously in an ATP-dependent manner. This is DNA gyrase subunit A from Mycobacterium tuberculosis (strain ATCC 25618 / H37Rv).